We begin with the raw amino-acid sequence, 1386 residues long: Pleckstrin homology domain-containing family G member 2 (1386 aa).

Disordered stretches follow at residues 1-21 and 36-82; these read MPEG…GCGR and TAPA…PLPG. Composition is skewed to low complexity over residues 8 to 17 and 45 to 62; these read LSLSKPSPSL and SPRG…GSEG. At Ser90 the chain carries Phosphoserine. In terms of domain architecture, DH spans 102-283; it reads RLERVAREIV…TAVAWYINDM (182 aa). One can recognise a PH domain in the interval 313 to 411; sequence ELVLEGAFRG…WIHCLQRLFF (99 aa). Disordered regions lie at residues 436-540, 554-612, 701-739, 790-815, and 829-859; these read KSKP…PSGT, GLRD…PSPL, EPAE…EEGV, ILED…RTAS, and QQMQ…SPCL. At Thr445 the chain carries Phosphothreonine. Phosphoserine occurs at positions 450 and 469. Residues 592-603 are compositionally biased toward acidic residues; that stretch reads SEEEEEEEEGLE. Residues Ser911 and Ser1049 each carry the phosphoserine modification. 2 disordered regions span residues 1037 to 1099 and 1162 to 1191; these read PVPK…PLPC and TSPK…DTQV. 2 stretches are compositionally biased toward polar residues: residues 1048–1059 and 1073–1086; these read ESPTNIPLTKQG and QPIQ…SSLD. Position 1257 is a phosphothreonine (Thr1257). Residues Ser1261 and Ser1310 each carry the phosphoserine modification. 2 disordered regions span residues 1291-1333 and 1367-1386; these read ARRQ…ARRL and TQES…PFHM. Positions 1301-1317 are enriched in low complexity; sequence PAASRGSWSSAPTSRAS. Over residues 1318 to 1330 the composition is skewed to pro residues; that stretch reads SPPPQPQPPPPPA.

Its function is as follows. May be a transforming oncogene with exchange activity for CDC42. May be a guanine-nucleotide exchange factor (GEF) for RAC1 and CDC42. Activated by the binding to subunits beta and gamma of the heterotrimeric guanine nucleotide-binding protein (G protein). Involved in the regulation of actin polymerization. The protein is Pleckstrin homology domain-containing family G member 2 (PLEKHG2) of Homo sapiens (Human).